The chain runs to 303 residues: Bifunctional protein FolD (303 aa).

NADP(+)-binding positions include 175–177 and I243; that span reads GVS.

It belongs to the tetrahydrofolate dehydrogenase/cyclohydrolase family. In terms of assembly, homodimer.

It carries out the reaction (6R)-5,10-methylene-5,6,7,8-tetrahydrofolate + NADP(+) = (6R)-5,10-methenyltetrahydrofolate + NADPH. The enzyme catalyses (6R)-5,10-methenyltetrahydrofolate + H2O = (6R)-10-formyltetrahydrofolate + H(+). Its pathway is one-carbon metabolism; tetrahydrofolate interconversion. In terms of biological role, catalyzes the oxidation of 5,10-methylenetetrahydrofolate to 5,10-methenyltetrahydrofolate and then the hydrolysis of 5,10-methenyltetrahydrofolate to 10-formyltetrahydrofolate. The sequence is that of Bifunctional protein FolD from Xanthomonas axonopodis pv. citri (strain 306).